A 224-amino-acid chain; its full sequence is UPF0111 protein CPn_0681/CP_0066/CPj0681/CpB0708 (224 aa).

This sequence belongs to the UPF0111 family.

The chain is UPF0111 protein CPn_0681/CP_0066/CPj0681/CpB0708 from Chlamydia pneumoniae (Chlamydophila pneumoniae).